The following is a 432-amino-acid chain: Bifunctional protein GlmU (432 aa).

The pyrophosphorylase stretch occupies residues 1 to 223 (MGKKSIIILA…EENFKGVNSK (223 aa)). UDP-N-acetyl-alpha-D-glucosamine contacts are provided by residues 9 to 12 (LAAG), Lys-23, Gln-75, and 82 to 83 (GT). Position 103 (Asp-103) interacts with Mg(2+). Residues Gly-135, Glu-149, Asn-164, and Asn-221 each contribute to the UDP-N-acetyl-alpha-D-glucosamine site. Residue Asn-221 coordinates Mg(2+). Positions 224 to 244 (VELADAEVIHQNRIKKEFMKA) are linker. The tract at residues 245–432 (GVIMRLPDTI…FYKHFSSKKK (188 aa)) is N-acetyltransferase. 2 residues coordinate UDP-N-acetyl-alpha-D-glucosamine: Arg-308 and Lys-325. The active-site Proton acceptor is the His-336. UDP-N-acetyl-alpha-D-glucosamine is bound by residues Tyr-339 and Asn-350. Residues 359–360 (NY), Ser-378, Ala-396, and Arg-413 each bind acetyl-CoA.

In the N-terminal section; belongs to the N-acetylglucosamine-1-phosphate uridyltransferase family. This sequence in the C-terminal section; belongs to the transferase hexapeptide repeat family. As to quaternary structure, homotrimer. The cofactor is Mg(2+).

The protein resides in the cytoplasm. It catalyses the reaction alpha-D-glucosamine 1-phosphate + acetyl-CoA = N-acetyl-alpha-D-glucosamine 1-phosphate + CoA + H(+). It carries out the reaction N-acetyl-alpha-D-glucosamine 1-phosphate + UTP + H(+) = UDP-N-acetyl-alpha-D-glucosamine + diphosphate. Its pathway is nucleotide-sugar biosynthesis; UDP-N-acetyl-alpha-D-glucosamine biosynthesis; N-acetyl-alpha-D-glucosamine 1-phosphate from alpha-D-glucosamine 6-phosphate (route II): step 2/2. The protein operates within nucleotide-sugar biosynthesis; UDP-N-acetyl-alpha-D-glucosamine biosynthesis; UDP-N-acetyl-alpha-D-glucosamine from N-acetyl-alpha-D-glucosamine 1-phosphate: step 1/1. It functions in the pathway bacterial outer membrane biogenesis; LPS lipid A biosynthesis. Catalyzes the last two sequential reactions in the de novo biosynthetic pathway for UDP-N-acetylglucosamine (UDP-GlcNAc). The C-terminal domain catalyzes the transfer of acetyl group from acetyl coenzyme A to glucosamine-1-phosphate (GlcN-1-P) to produce N-acetylglucosamine-1-phosphate (GlcNAc-1-P), which is converted into UDP-GlcNAc by the transfer of uridine 5-monophosphate (from uridine 5-triphosphate), a reaction catalyzed by the N-terminal domain. The chain is Bifunctional protein GlmU from Aliarcobacter butzleri (strain RM4018) (Arcobacter butzleri).